The primary structure comprises 248 residues: Pyridoxine 5'-phosphate synthase (248 aa).

A 3-amino-2-oxopropyl phosphate-binding site is contributed by Asn-12. 14–15 (DH) contacts 1-deoxy-D-xylulose 5-phosphate. Residue Arg-23 coordinates 3-amino-2-oxopropyl phosphate. His-48 acts as the Proton acceptor in catalysis. 2 residues coordinate 1-deoxy-D-xylulose 5-phosphate: Arg-50 and His-55. The Proton acceptor role is filled by Glu-75. Thr-105 lines the 1-deoxy-D-xylulose 5-phosphate pocket. His-196 (proton donor) is an active-site residue. 3-amino-2-oxopropyl phosphate contacts are provided by residues Gly-197 and 218–219 (GH).

It belongs to the PNP synthase family. In terms of assembly, homooctamer; tetramer of dimers.

The protein resides in the cytoplasm. The enzyme catalyses 3-amino-2-oxopropyl phosphate + 1-deoxy-D-xylulose 5-phosphate = pyridoxine 5'-phosphate + phosphate + 2 H2O + H(+). Its pathway is cofactor biosynthesis; pyridoxine 5'-phosphate biosynthesis; pyridoxine 5'-phosphate from D-erythrose 4-phosphate: step 5/5. Its function is as follows. Catalyzes the complicated ring closure reaction between the two acyclic compounds 1-deoxy-D-xylulose-5-phosphate (DXP) and 3-amino-2-oxopropyl phosphate (1-amino-acetone-3-phosphate or AAP) to form pyridoxine 5'-phosphate (PNP) and inorganic phosphate. This Stutzerimonas stutzeri (strain A1501) (Pseudomonas stutzeri) protein is Pyridoxine 5'-phosphate synthase.